An 855-amino-acid polypeptide reads, in one-letter code: Pre-mRNA-splicing factor SYF1 (855 aa).

9 HAT repeats span residues 15-47 (LVFE…FKQG), 48-80 (APKP…ARRA), 90-122 (PAYE…FLMD), 124-158 (GRVT…FLRS), 160-192 (PLPE…SSDR), 198-230 (QRLA…LISQ), 235-268 (VQSL…YYIR), 270-305 (GHFE…FEES), and 369-407 (GRPR…FYED). An N6-acetyllysine modification is found at Lys420. HAT repeat units follow at residues 498-530 (GTFQ…FLEE), 532-566 (KYFE…KFIS), 571-605 (RKLE…LEEE), 643-677 (YGVT…MECK), and 679-713 (GEID…FEVR). A disordered region spans residues 808 to 855 (AELAQQANPEEIQLGEDEDEDEMDLEPNEVRLEQQSVPAAVFGSLKED). Acidic residues predominate over residues 820 to 834 (QLGEDEDEDEMDLEP). Phosphoserine is present on Ser851.

It belongs to the crooked-neck family. In terms of assembly, associates with RNA polymerase II, the TCR-specific proteins CKN1/CSA and ERCC6/CSB, and XPA. Identified in the spliceosome C complex. Component of the XAB2 complex, a multimeric protein complex composed of XAB2, PRPF19, AQR, ZNF830, ISY1, and PPIE. Identified in a pentameric intron-binding (IB) complex composed of AQR, XAB2, ISY1, ZNF830 and PPIE that is incorporated into the spliceosome as a preassembled complex. The IB complex does not contain PRPF19.

It is found in the nucleus. In terms of biological role, involved in pre-mRNA splicing as component of the spliceosome. Involved in transcription-coupled repair (TCR), transcription and pre-mRNA splicing. The chain is Pre-mRNA-splicing factor SYF1 (Xab2) from Rattus norvegicus (Rat).